The chain runs to 387 residues: GDSL esterase/lipase At2g23540 (387 aa).

The N-terminal stretch at 1–32 (MATRASTSSRVSPAFTFLVIFFLLSLTASVEA) is a signal peptide. The active-site Nucleophile is serine 55. Residues asparagine 139 and asparagine 159 are each glycosylated (N-linked (GlcNAc...) asparagine). Residues aspartate 352 and histidine 355 contribute to the active site. N-linked (GlcNAc...) asparagine glycosylation is present at asparagine 380.

It belongs to the 'GDSL' lipolytic enzyme family.

The protein localises to the secreted. This is GDSL esterase/lipase At2g23540 from Arabidopsis thaliana (Mouse-ear cress).